The primary structure comprises 230 residues: Aspartate and serine-rich protein (230 aa).

3 N-linked (GlcNAc...) asparagine glycosylation sites follow: Asn-17, Asn-132, and Asn-139. A disordered region spans residues 112 to 230 (LNGGATAGGV…DSDSNDTDSD (119 aa)). Acidic residues predominate over residues 126–140 (DTDESSNDTDEDSND). Residues 141–161 (SDSKDTDSDSKDTDSDSKDSD) are compositionally biased toward basic and acidic residues. Residues Asn-163 and Asn-170 are each glycosylated (N-linked (GlcNAc...) asparagine). Basic and acidic residues predominate over residues 173–223 (DSKDTDSDSKDSDSKDTDSDSKDTDSDSKDSDSKDTDSDSKDTDSDSKDSD). N-linked (GlcNAc...) asparagine glycosylation is present at Asn-225.

As to expression, component of the acid-insoluble organic matrix of calcified layers of the shell (at protein level).

Its subcellular location is the secreted. The sequence is that of Aspartate and serine-rich protein from Lottia gigantea (Giant owl limpet).